Reading from the N-terminus, the 1772-residue chain is Putative stereocilin-like protein (1772 aa).

The N-terminal stretch at 1 to 25 is a signal peptide; sequence MALSLWPLLLLLLLLLLLSFAVTLA. 4 N-linked (GlcNAc...) asparagine glycosylation sites follow: Asn-65, Asn-427, Asn-476, and Asn-565.

The protein belongs to the stereocilin family.

Its subcellular location is the secreted. The polypeptide is Putative stereocilin-like protein (STRCP1) (Homo sapiens (Human)).